The following is a 367-amino-acid chain: Glutamate 5-kinase (367 aa).

Lys-10 is an ATP binding site. Substrate-binding residues include Ser-50, Asp-137, and Asn-149. An ATP-binding site is contributed by 169 to 170 (TD). Residues 275–353 (AGEITVDEGA…QQIDAILGYE (79 aa)) form the PUA domain.

This sequence belongs to the glutamate 5-kinase family.

It localises to the cytoplasm. It carries out the reaction L-glutamate + ATP = L-glutamyl 5-phosphate + ADP. Its pathway is amino-acid biosynthesis; L-proline biosynthesis; L-glutamate 5-semialdehyde from L-glutamate: step 1/2. In terms of biological role, catalyzes the transfer of a phosphate group to glutamate to form L-glutamate 5-phosphate. This is Glutamate 5-kinase from Salmonella paratyphi B (strain ATCC BAA-1250 / SPB7).